Consider the following 360-residue polypeptide: Bifunctional protein FolD 4, chloroplastic (360 aa).

Residues 1-51 (MASMMFTDCSSTTTSRLIHLNRSSGTFLLRQCVGQLRLQTTASGRGCCIRS) constitute a chloroplast transit peptide. N-acetylserine is present on S52.

This sequence belongs to the tetrahydrofolate dehydrogenase/cyclohydrolase family. In terms of assembly, homodimer.

The protein resides in the plastid. It localises to the chloroplast. It catalyses the reaction (6R)-5,10-methylene-5,6,7,8-tetrahydrofolate + NADP(+) = (6R)-5,10-methenyltetrahydrofolate + NADPH. The enzyme catalyses (6R)-5,10-methenyltetrahydrofolate + H2O = (6R)-10-formyltetrahydrofolate + H(+). The protein operates within one-carbon metabolism; tetrahydrofolate interconversion. Catalyzes the oxidation of 5,10-methylenetetrahydrofolate to 5,10-methenyltetrahydrofolate and then the hydrolysis of 5,10-methenyltetrahydrofolate to 10-formyltetrahydrofolate. The sequence is that of Bifunctional protein FolD 4, chloroplastic (FOLD4) from Arabidopsis thaliana (Mouse-ear cress).